The primary structure comprises 227 residues: 2,3-bisphosphoglycerate-dependent phosphoglycerate mutase (227 aa).

Substrate-binding positions include Arg-8–Asn-15, Thr-21–Gly-22, Arg-58, Glu-110–Tyr-113, Lys-121, Arg-137–Arg-138, and Gly-181–Asn-182. Residue His-9 is the Tele-phosphohistidine intermediate of the active site. The active-site Proton donor/acceptor is the Glu-110.

This sequence belongs to the phosphoglycerate mutase family. BPG-dependent PGAM subfamily.

The catalysed reaction is (2R)-2-phosphoglycerate = (2R)-3-phosphoglycerate. It participates in carbohydrate degradation; glycolysis; pyruvate from D-glyceraldehyde 3-phosphate: step 3/5. In terms of biological role, catalyzes the interconversion of 2-phosphoglycerate and 3-phosphoglycerate. This Chlamydia felis (strain Fe/C-56) (Chlamydophila felis) protein is 2,3-bisphosphoglycerate-dependent phosphoglycerate mutase.